The chain runs to 177 residues: von Ebner gland protein 2 (177 aa).

The signal sequence occupies residues 1 to 18; the sequence is MKALLLTFSLSLLAALQA. The cysteines at positions 80 and 172 are disulfide-linked.

Belongs to the calycin superfamily. Lipocalin family. In terms of assembly, homodimer.

It is found in the secreted. Could play a role in taste reception. Could be necessary for the concentration and delivery of sapid molecules in the gustatory system. The sequence is that of von Ebner gland protein 2 (Vegp2) from Rattus norvegicus (Rat).